The following is a 441-amino-acid chain: Membrane protein PB1A10.07c (441 aa).

The next 11 membrane-spanning stretches (helical) occupy residues 1 to 21 (MGAV…VVGI), 41 to 61 (VGAV…SWCM), 97 to 117 (LSFT…LCNT), 128 to 148 (GLWP…FFIP), 158 to 178 (IISV…LVDF), 206 to 226 (TVGM…FFCA), 235 to 255 (INTI…HPTI), 263 to 283 (GLAQ…SALA), 307 to 327 (VIGA…AASS), 364 to 384 (YNFI…ASLL), and 415 to 435 (IITS…PVFF).

It belongs to the TDE1 family.

Its subcellular location is the membrane. This Schizosaccharomyces pombe (strain 972 / ATCC 24843) (Fission yeast) protein is Membrane protein PB1A10.07c.